A 389-amino-acid chain; its full sequence is COP9 signalosome complex subunit 11 (389 aa).

The region spanning Gln143–Met312 is the PCI domain.

As to quaternary structure, component of a COP9 signalosome-like (CSN) complex.

The protein localises to the cytoplasm. It localises to the nucleus. In terms of biological role, component of the COP9 signalosome (CSN) complex that acts as an regulator of the ubiquitin (Ubl) conjugation pathway by mediating the deneddylation of the cullin subunit of SCF-type E3 ubiquitin-protein ligase complexes The CSN complex is involved in the regulation of the mating pheromone response. PCI8 may also be involved in transcriptional and translational control. This Kluyveromyces lactis (strain ATCC 8585 / CBS 2359 / DSM 70799 / NBRC 1267 / NRRL Y-1140 / WM37) (Yeast) protein is COP9 signalosome complex subunit 11 (PCI8).